The chain runs to 1012 residues: Structural polyprotein (1012 aa).

Residue aspartate 30 coordinates a divalent metal cation. Positions 513–755 (ADKGYEVVAN…AGRQYHLAMA (243 aa)) constitute a Peptidase S50 domain. The active-site Nucleophile is the serine 652. Residue lysine 692 is part of the active site. Disordered regions lie at residues 837–857 (GYGVEARGPTPEEAQRKKDTR) and 968–1012 (TAME…EDLE). Residues 975 to 986 (RNPRRAPPKPKP) are compositionally biased toward basic residues. The interval 1003 to 1012 (IRTVSDEDLE) is interaction with VP1 protein.

As to quaternary structure, homotrimer. A central divalent metal stabilizes the VP2 trimer. Interacts with host ITGA4/ITGB1. In terms of assembly, homodimer. Interacts (via C-terminus) with VP1 in the cytoplasm. Interacts with VP2. In terms of processing, specific enzymatic cleavages yield mature proteins. The capsid assembly seems to be regulated by polyprotein processing. The protease VP4 cleaves itself off the polyprotein, thus releasing pre-VP2 and VP3 within the infected cell. During capsid assembly, the C-terminus of pre-VP2 is further processed by VP4, giving rise to VP2, the external capsid protein and three small peptides that all stay closely associated with the capsid.

Its subcellular location is the virion. The protein localises to the host cytoplasm. Functionally, capsid protein VP2 self assembles to form an icosahedral capsid with a T=13 symmetry, about 70 nm in diameter, and consisting of 260 VP2 trimers. The capsid encapsulates the genomic dsRNA. VP2 is also involved in attachment and entry into the host cell by interacting with host ITGA4/ITGB1. Its function is as follows. The precursor of VP2 plays an important role in capsid assembly. First, pre-VP2 and VP2 oligomers assemble to form a procapsid. Then, the pre-VP2 intermediates may be processed into VP2 proteins by proteolytic cleavage mediated by VP4 to obtain the mature virion. The final capsid is composed of pentamers and hexamers but VP2 has a natural tendency to assemble into all-pentameric structures. Therefore pre-VP2 may be required to allow formation of the hexameric structures. Protease VP4 is a serine protease that cleaves the polyprotein into its final products. Pre-VP2 is first partially cleaved, and may be completely processed by VP4 upon capsid maturation. In terms of biological role, capsid protein VP3 plays a key role in virion assembly by providing a scaffold for the capsid made of VP2. May self-assemble to form a T=4-like icosahedral inner-capsid composed of at least 180 trimers. Plays a role in genomic RNA packaging by recruiting VP1 into the capsid and interacting with the dsRNA genome segments to form a ribonucleoprotein complex. Additionally, the interaction of the VP3 C-terminal tail with VP1 removes the inherent structural blockade of the polymerase active site. Thus, VP3 can also function as a transcriptional activator. Functionally, structural peptide 1 is a small peptide derived from pre-VP2 C-terminus. It destabilizes and perforates cell membranes, suggesting a role during entry. Its function is as follows. Structural peptide 2 is a small peptide derived from pVP2 C-terminus. It is not essential for the virus viability, but viral growth is affected when missing. Structural peptide 3 is a small peptide derived from pVP2 C-terminus. It is not essential for the virus viability, but viral growth is affected when missing. In terms of biological role, structural peptide 4 is a small peptide derived from pVP2 C-terminus. It is essential for the virus viability. In Gallus gallus (Chicken), this protein is Structural polyprotein.